A 207-amino-acid polypeptide reads, in one-letter code: MLHTPSIKQASLLWDVAGLVAGVDEAGRGPLAGPVVAAAVILDDLQPIKGLADSKILSARRREQLFDEIRAKALCCCIAQASVEEIERLNILQATLLAMRRAVEGLRLKPALVLVDGNRLPVLTMRAEAIVKGDALVAAISAASILAKVHRDRWCAEVDVQYPQYGFARHKGYGTVQHLAALTKHGACPQHRKTFGPVAEVLREALP.

The 190-residue stretch at 18–207 (GLVAGVDEAG…VAEVLREALP (190 aa)) folds into the RNase H type-2 domain. Residues aspartate 24, glutamate 25, and aspartate 116 each contribute to the a divalent metal cation site.

This sequence belongs to the RNase HII family. Mn(2+) serves as cofactor. The cofactor is Mg(2+).

Its subcellular location is the cytoplasm. The catalysed reaction is Endonucleolytic cleavage to 5'-phosphomonoester.. In terms of biological role, endonuclease that specifically degrades the RNA of RNA-DNA hybrids. The polypeptide is Ribonuclease HII (Albidiferax ferrireducens (strain ATCC BAA-621 / DSM 15236 / T118) (Rhodoferax ferrireducens)).